Here is a 189-residue protein sequence, read N- to C-terminus: Crossover junction endodeoxyribonuclease RuvC (189 aa).

Active-site residues include Asp11, Glu71, and Asp143. Residues Asp11, Glu71, and Asp143 each coordinate Mg(2+).

Belongs to the RuvC family. In terms of assembly, homodimer which binds Holliday junction (HJ) DNA. The HJ becomes 2-fold symmetrical on binding to RuvC with unstacked arms; it has a different conformation from HJ DNA in complex with RuvA. In the full resolvosome a probable DNA-RuvA(4)-RuvB(12)-RuvC(2) complex forms which resolves the HJ. Mg(2+) serves as cofactor.

The protein resides in the cytoplasm. It catalyses the reaction Endonucleolytic cleavage at a junction such as a reciprocal single-stranded crossover between two homologous DNA duplexes (Holliday junction).. The RuvA-RuvB-RuvC complex processes Holliday junction (HJ) DNA during genetic recombination and DNA repair. Endonuclease that resolves HJ intermediates. Cleaves cruciform DNA by making single-stranded nicks across the HJ at symmetrical positions within the homologous arms, yielding a 5'-phosphate and a 3'-hydroxyl group; requires a central core of homology in the junction. The consensus cleavage sequence is 5'-(A/T)TT(C/G)-3'. Cleavage occurs on the 3'-side of the TT dinucleotide at the point of strand exchange. HJ branch migration catalyzed by RuvA-RuvB allows RuvC to scan DNA until it finds its consensus sequence, where it cleaves and resolves the cruciform DNA. In Methylorubrum extorquens (strain CM4 / NCIMB 13688) (Methylobacterium extorquens), this protein is Crossover junction endodeoxyribonuclease RuvC.